The primary structure comprises 518 residues: Glutamate--cysteine ligase (518 aa).

Belongs to the glutamate--cysteine ligase type 1 family. Type 1 subfamily.

The enzyme catalyses L-cysteine + L-glutamate + ATP = gamma-L-glutamyl-L-cysteine + ADP + phosphate + H(+). The protein operates within sulfur metabolism; glutathione biosynthesis; glutathione from L-cysteine and L-glutamate: step 1/2. This Buchnera aphidicola subsp. Acyrthosiphon pisum (strain APS) (Acyrthosiphon pisum symbiotic bacterium) protein is Glutamate--cysteine ligase (gshA).